The chain runs to 389 residues: Succinate--CoA ligase [ADP-forming] subunit beta (389 aa).

The ATP-grasp domain occupies 9 to 244 (KQLLAEYGIP…KTQEDETEVT (236 aa)). ATP contacts are provided by residues Lys-46, 53–55 (GRG), Gly-102, and Glu-107. Mg(2+) is bound by residues Asn-199 and Asp-213. Residues Asn-264 and 321–323 (GIV) contribute to the substrate site.

This sequence belongs to the succinate/malate CoA ligase beta subunit family. Heterotetramer of two alpha and two beta subunits. It depends on Mg(2+) as a cofactor.

It carries out the reaction succinate + ATP + CoA = succinyl-CoA + ADP + phosphate. It catalyses the reaction GTP + succinate + CoA = succinyl-CoA + GDP + phosphate. It participates in carbohydrate metabolism; tricarboxylic acid cycle; succinate from succinyl-CoA (ligase route): step 1/1. Succinyl-CoA synthetase functions in the citric acid cycle (TCA), coupling the hydrolysis of succinyl-CoA to the synthesis of either ATP or GTP and thus represents the only step of substrate-level phosphorylation in the TCA. The beta subunit provides nucleotide specificity of the enzyme and binds the substrate succinate, while the binding sites for coenzyme A and phosphate are found in the alpha subunit. This chain is Succinate--CoA ligase [ADP-forming] subunit beta, found in Xanthomonas oryzae pv. oryzae (strain MAFF 311018).